Reading from the N-terminus, the 258-residue chain is 5'-nucleotidase SurE (258 aa).

A divalent metal cation is bound by residues Asp-9, Asp-10, Ser-42, and Asn-96.

This sequence belongs to the SurE nucleotidase family. Requires a divalent metal cation as cofactor.

It localises to the cytoplasm. The enzyme catalyses a ribonucleoside 5'-phosphate + H2O = a ribonucleoside + phosphate. Functionally, nucleotidase that shows phosphatase activity on nucleoside 5'-monophosphates. In Campylobacter jejuni subsp. jejuni serotype O:23/36 (strain 81-176), this protein is 5'-nucleotidase SurE.